Here is a 343-residue protein sequence, read N- to C-terminus: GTPase Obg (343 aa).

An Obg domain is found at methionine 1 to leucine 159. Residues alanine 160–glutamate 334 form the OBG-type G domain. GTP contacts are provided by residues glycine 166–serine 173, phenylalanine 191–tyrosine 195, aspartate 213–glycine 216, asparagine 284–aspartate 287, and serine 315–leucine 317. The Mg(2+) site is built by serine 173 and threonine 193.

This sequence belongs to the TRAFAC class OBG-HflX-like GTPase superfamily. OBG GTPase family. Monomer. Mg(2+) serves as cofactor.

It is found in the cytoplasm. In terms of biological role, an essential GTPase which binds GTP, GDP and possibly (p)ppGpp with moderate affinity, with high nucleotide exchange rates and a fairly low GTP hydrolysis rate. Plays a role in control of the cell cycle, stress response, ribosome biogenesis and in those bacteria that undergo differentiation, in morphogenesis control. The polypeptide is GTPase Obg (Nitrosomonas eutropha (strain DSM 101675 / C91 / Nm57)).